A 72-amino-acid polypeptide reads, in one-letter code: Translation initiation factor IF-1 (72 aa).

Residues 1-72 (MAKEDNIEMQ…TKGRIVFRAR (72 aa)) form the S1-like domain.

It belongs to the IF-1 family. In terms of assembly, component of the 30S ribosomal translation pre-initiation complex which assembles on the 30S ribosome in the order IF-2 and IF-3, IF-1 and N-formylmethionyl-tRNA(fMet); mRNA recruitment can occur at any time during PIC assembly.

Its subcellular location is the cytoplasm. Its function is as follows. One of the essential components for the initiation of protein synthesis. Stabilizes the binding of IF-2 and IF-3 on the 30S subunit to which N-formylmethionyl-tRNA(fMet) subsequently binds. Helps modulate mRNA selection, yielding the 30S pre-initiation complex (PIC). Upon addition of the 50S ribosomal subunit IF-1, IF-2 and IF-3 are released leaving the mature 70S translation initiation complex. This Shewanella baltica (strain OS155 / ATCC BAA-1091) protein is Translation initiation factor IF-1.